The sequence spans 469 residues: 3-isopropylmalate dehydratase large subunit (469 aa).

3 residues coordinate [4Fe-4S] cluster: C350, C410, and C413.

Belongs to the aconitase/IPM isomerase family. LeuC type 1 subfamily. Heterodimer of LeuC and LeuD. Requires [4Fe-4S] cluster as cofactor.

The catalysed reaction is (2R,3S)-3-isopropylmalate = (2S)-2-isopropylmalate. It functions in the pathway amino-acid biosynthesis; L-leucine biosynthesis; L-leucine from 3-methyl-2-oxobutanoate: step 2/4. Its function is as follows. Catalyzes the isomerization between 2-isopropylmalate and 3-isopropylmalate, via the formation of 2-isopropylmaleate. In Rhizobium rhizogenes (strain K84 / ATCC BAA-868) (Agrobacterium radiobacter), this protein is 3-isopropylmalate dehydratase large subunit.